The primary structure comprises 139 residues: Large ribosomal subunit protein uL16 (139 aa).

The protein belongs to the universal ribosomal protein uL16 family. In terms of assembly, part of the 50S ribosomal subunit.

Functionally, binds 23S rRNA and is also seen to make contacts with the A and possibly P site tRNAs. The protein is Large ribosomal subunit protein uL16 of Synechocystis sp. (strain ATCC 27184 / PCC 6803 / Kazusa).